We begin with the raw amino-acid sequence, 181 residues long: Probable pyruvoyl-dependent arginine decarboxylase (181 aa).

Ser-43 is subject to Pyruvic acid (Ser).

The protein belongs to the PdaD family. Pyruvate serves as cofactor.

The enzyme catalyses L-arginine + H(+) = agmatine + CO2. The polypeptide is Probable pyruvoyl-dependent arginine decarboxylase (Chlorobaculum parvum (strain DSM 263 / NCIMB 8327) (Chlorobium vibrioforme subsp. thiosulfatophilum)).